The following is a 242-amino-acid chain: ATP synthase subunit a (242 aa).

6 consecutive transmembrane segments (helical) span residues S29–Y49, F84–T104, I114–V134, F140–I160, M181–L201, and F203–Q223.

The protein belongs to the ATPase A chain family. In terms of assembly, F-type ATPases have 2 components, CF(1) - the catalytic core - and CF(0) - the membrane proton channel. CF(1) has five subunits: alpha(3), beta(3), gamma(1), delta(1), epsilon(1). CF(0) has three main subunits: a(1), b(2) and c(9-12). The alpha and beta chains form an alternating ring which encloses part of the gamma chain. CF(1) is attached to CF(0) by a central stalk formed by the gamma and epsilon chains, while a peripheral stalk is formed by the delta and b chains.

It is found in the cell inner membrane. Key component of the proton channel; it plays a direct role in the translocation of protons across the membrane. This chain is ATP synthase subunit a, found in Rickettsia akari (strain Hartford).